The primary structure comprises 342 residues: N-acetyl-gamma-glutamyl-phosphate reductase (342 aa).

C149 is an active-site residue.

It belongs to the NAGSA dehydrogenase family. Type 1 subfamily.

Its subcellular location is the cytoplasm. It carries out the reaction N-acetyl-L-glutamate 5-semialdehyde + phosphate + NADP(+) = N-acetyl-L-glutamyl 5-phosphate + NADPH + H(+). The protein operates within amino-acid biosynthesis; L-arginine biosynthesis; N(2)-acetyl-L-ornithine from L-glutamate: step 3/4. Functionally, catalyzes the NADPH-dependent reduction of N-acetyl-5-glutamyl phosphate to yield N-acetyl-L-glutamate 5-semialdehyde. The polypeptide is N-acetyl-gamma-glutamyl-phosphate reductase (Laribacter hongkongensis (strain HLHK9)).